A 108-amino-acid chain; its full sequence is MSAVNSKTKFDEGRLMQVLVAPIVSEKATMIADKTNAVTFKVLQDATKFEIKAAVQLMFKVDVQSVAVLNIKGKTKRFGKSVGRRDNIRKAYVTLKPGQELNLGGESA.

The protein belongs to the universal ribosomal protein uL23 family. Part of the 50S ribosomal subunit. Contacts protein L29, and trigger factor when it is bound to the ribosome.

One of the early assembly proteins it binds 23S rRNA. One of the proteins that surrounds the polypeptide exit tunnel on the outside of the ribosome. Forms the main docking site for trigger factor binding to the ribosome. The chain is Large ribosomal subunit protein uL23 from Polaromonas sp. (strain JS666 / ATCC BAA-500).